We begin with the raw amino-acid sequence, 330 residues long: Ketol-acid reductoisomerase (NADP(+)) (330 aa).

Residues 2–182 (IHVYYDKDAN…GCTKAGVIET (181 aa)) form the KARI N-terminal Rossmann domain. Residues 25-28 (YGSQ), Arg-48, Ser-51, Ser-53, and 83-86 (DEVQ) each bind NADP(+). His-108 is an active-site residue. Gly-134 lines the NADP(+) pocket. One can recognise a KARI C-terminal knotted domain in the interval 183-328 (TFKEETETDL…KKLRDMMPWI (146 aa)). 4 residues coordinate Mg(2+): Asp-191, Glu-195, Glu-227, and Glu-231. Residue Ser-252 coordinates substrate.

Belongs to the ketol-acid reductoisomerase family. The cofactor is Mg(2+).

The enzyme catalyses (2R)-2,3-dihydroxy-3-methylbutanoate + NADP(+) = (2S)-2-acetolactate + NADPH + H(+). It catalyses the reaction (2R,3R)-2,3-dihydroxy-3-methylpentanoate + NADP(+) = (S)-2-ethyl-2-hydroxy-3-oxobutanoate + NADPH + H(+). It participates in amino-acid biosynthesis; L-isoleucine biosynthesis; L-isoleucine from 2-oxobutanoate: step 2/4. It functions in the pathway amino-acid biosynthesis; L-valine biosynthesis; L-valine from pyruvate: step 2/4. Its function is as follows. Involved in the biosynthesis of branched-chain amino acids (BCAA). Catalyzes an alkyl-migration followed by a ketol-acid reduction of (S)-2-acetolactate (S2AL) to yield (R)-2,3-dihydroxy-isovalerate. In the isomerase reaction, S2AL is rearranged via a Mg-dependent methyl migration to produce 3-hydroxy-3-methyl-2-ketobutyrate (HMKB). In the reductase reaction, this 2-ketoacid undergoes a metal-dependent reduction by NADPH to yield (R)-2,3-dihydroxy-isovalerate. This chain is Ketol-acid reductoisomerase (NADP(+)), found in Halothermothrix orenii (strain H 168 / OCM 544 / DSM 9562).